We begin with the raw amino-acid sequence, 371 residues long: Probable L-aspartate decarboxylase (371 aa).

Lysine 232 carries the N6-(pyridoxal phosphate)lysine modification.

This sequence belongs to the group II decarboxylase family. MfnA subfamily. It depends on pyridoxal 5'-phosphate as a cofactor.

The enzyme catalyses L-aspartate + H(+) = beta-alanine + CO2. It functions in the pathway cofactor biosynthesis; coenzyme A biosynthesis. Catalyzes the decarboxylation of L-aspartate to produce beta-alanine. The protein is Probable L-aspartate decarboxylase of Pyrococcus furiosus (strain ATCC 43587 / DSM 3638 / JCM 8422 / Vc1).